We begin with the raw amino-acid sequence, 145 residues long: D-aminoacyl-tRNA deacylase (145 aa).

Positions 137-138 match the Gly-cisPro motif, important for rejection of L-amino acids motif; it reads GP.

This sequence belongs to the DTD family. Homodimer.

The protein localises to the cytoplasm. It catalyses the reaction glycyl-tRNA(Ala) + H2O = tRNA(Ala) + glycine + H(+). The enzyme catalyses a D-aminoacyl-tRNA + H2O = a tRNA + a D-alpha-amino acid + H(+). In terms of biological role, an aminoacyl-tRNA editing enzyme that deacylates mischarged D-aminoacyl-tRNAs. Also deacylates mischarged glycyl-tRNA(Ala), protecting cells against glycine mischarging by AlaRS. Acts via tRNA-based rather than protein-based catalysis; rejects L-amino acids rather than detecting D-amino acids in the active site. By recycling D-aminoacyl-tRNA to D-amino acids and free tRNA molecules, this enzyme counteracts the toxicity associated with the formation of D-aminoacyl-tRNA entities in vivo and helps enforce protein L-homochirality. This chain is D-aminoacyl-tRNA deacylase, found in Pseudomonas putida (strain ATCC 700007 / DSM 6899 / JCM 31910 / BCRC 17059 / LMG 24140 / F1).